Here is a 660-residue protein sequence, read N- to C-terminus: Probable alpha-galactosidase D (660 aa).

A signal peptide spans 1-20 (MLLHFILYAALSSVVTSVSL). N-linked (GlcNAc...) asparagine glycosylation is found at asparagine 47, asparagine 91, and asparagine 129. Cysteine 124 and cysteine 157 are joined by a disulfide. The active-site Nucleophile is the aspartate 155. Asparagine 182 and asparagine 191 each carry an N-linked (GlcNAc...) asparagine glycan. Substrate is bound at residue 200–204 (EWGIS). The active-site Proton donor is aspartate 222. N-linked (GlcNAc...) asparagine glycans are attached at residues asparagine 351, asparagine 403, asparagine 460, asparagine 492, asparagine 506, asparagine 514, and asparagine 584.

The protein belongs to the glycosyl hydrolase 27 family.

The protein resides in the secreted. The enzyme catalyses Hydrolysis of terminal, non-reducing alpha-D-galactose residues in alpha-D-galactosides, including galactose oligosaccharides, galactomannans and galactolipids.. In terms of biological role, hydrolyzes a variety of simple alpha-D-galactoside as well as more complex molecules such as oligosaccharides and polysaccharides. The protein is Probable alpha-galactosidase D (aglD) of Aspergillus niger (strain ATCC MYA-4892 / CBS 513.88 / FGSC A1513).